We begin with the raw amino-acid sequence, 679 residues long: E3 ubiquitin ligase RNF157 (679 aa).

The N-myristoyl glycine moiety is linked to residue Gly-2. An RING-type zinc finger spans residues 277–316 (CVVCLSDVRDTLILPCRHLCLCNTCADTLRYQANNCPICR). Residues 329-332 (RKKL) carry the D-box 1 motif. 2 stretches are compositionally biased toward polar residues: residues 339–349 (SFNPIISSQTS) and 478–537 (ESEN…SMSG). Disordered regions lie at residues 339 to 362 (SFNP…NIPP), 416 to 604 (LDRL…TQEG), and 650 to 679 (VSRN…PLAV). Positions 585 to 598 (QDAEGNDVIEEEDG) are enriched in acidic residues. The D-box 2 signature appears at 656 to 659 (RRRL). Phosphoserine is present on residues Ser-660, Ser-661, Ser-662, and Ser-663.

As to quaternary structure, interacts with APBB1. Interacts with CHD1; CHD1-binding controls RNF157 stability. Interacts with ATRN, MEGF8, TECR, MSI2, PLRG1, BYSL, MTERF3, PSMA1, MRPS18B, PRPF4, FASTKD2, SLC25A1, SMU1, CNOT9, MRPS2, MAGT1, FXR2, EMD, PSMD8, HDAC1, RAN, HSD17B12, TXNDC5 and MRPL19. Post-translationally, phosphorylation at Ser-660, Ser-661, Ser-662 and Ser-663 downstream of the PI3K and MAPK pathways influences the E3 ligase activity and stability of RNF157 during the cell cycle in an anaphase-promoting complex/cyclosome-CDH1-dependent manner.

It is found in the cytoplasm. It carries out the reaction S-ubiquitinyl-[E2 ubiquitin-conjugating enzyme]-L-cysteine + [acceptor protein]-L-lysine = [E2 ubiquitin-conjugating enzyme]-L-cysteine + N(6)-ubiquitinyl-[acceptor protein]-L-lysine.. E3 ubiquitin ligase that ubiquitinates APBB1 for its degradation by the proteasome and thus prevents apoptosis and promotes survival of neurons. Has a dual role in neurons as it is also required for dendrite growth and maintenance for which its ligase activity is not critical. May act as a scaffold molecule to regulate this process. Acts as a downstream effector of the interconnected PI3K and MAPK signaling pathways and thus participates in the regulation of the cell cycle. The chain is E3 ubiquitin ligase RNF157 (RNF157) from Homo sapiens (Human).